Here is a 640-residue protein sequence, read N- to C-terminus: Threonine--tRNA ligase (640 aa).

One can recognise a TGS domain in the interval M1–T61. The interval D242 to P533 is catalytic. The Zn(2+) site is built by C333, H384, and H510.

This sequence belongs to the class-II aminoacyl-tRNA synthetase family. In terms of assembly, homodimer. The cofactor is Zn(2+).

The protein localises to the cytoplasm. It carries out the reaction tRNA(Thr) + L-threonine + ATP = L-threonyl-tRNA(Thr) + AMP + diphosphate + H(+). Functionally, catalyzes the attachment of threonine to tRNA(Thr) in a two-step reaction: L-threonine is first activated by ATP to form Thr-AMP and then transferred to the acceptor end of tRNA(Thr). Also edits incorrectly charged L-seryl-tRNA(Thr). The polypeptide is Threonine--tRNA ligase (Pseudomonas syringae pv. syringae (strain B728a)).